A 360-amino-acid polypeptide reads, in one-letter code: Peptide chain release factor 1 (360 aa).

At glutamine 235 the chain carries N5-methylglutamine.

It belongs to the prokaryotic/mitochondrial release factor family. Post-translationally, methylated by PrmC. Methylation increases the termination efficiency of RF1.

It is found in the cytoplasm. Its function is as follows. Peptide chain release factor 1 directs the termination of translation in response to the peptide chain termination codons UAG and UAA. The chain is Peptide chain release factor 1 from Burkholderia thailandensis (strain ATCC 700388 / DSM 13276 / CCUG 48851 / CIP 106301 / E264).